A 459-amino-acid chain; its full sequence is Glutamyl-tRNA reductase (459 aa).

Residues 47 to 50 (TCNR), serine 140, 145 to 147 (EPQ), and glutamine 151 contribute to the substrate site. The active-site Nucleophile is the cysteine 48. Position 220–225 (220–225 (AAGEMN)) interacts with NADP(+).

The protein belongs to the glutamyl-tRNA reductase family. In terms of assembly, homodimer.

It catalyses the reaction (S)-4-amino-5-oxopentanoate + tRNA(Glu) + NADP(+) = L-glutamyl-tRNA(Glu) + NADPH + H(+). It functions in the pathway porphyrin-containing compound metabolism; protoporphyrin-IX biosynthesis; 5-aminolevulinate from L-glutamyl-tRNA(Glu): step 1/2. Its function is as follows. Catalyzes the NADPH-dependent reduction of glutamyl-tRNA(Glu) to glutamate 1-semialdehyde (GSA). This chain is Glutamyl-tRNA reductase, found in Psychrobacter arcticus (strain DSM 17307 / VKM B-2377 / 273-4).